A 607-amino-acid polypeptide reads, in one-letter code: Probable Ufm1-specific protease 2 (607 aa).

Active-site residues include C440, D564, and H566.

Belongs to the peptidase C78 family.

Thiol protease which recognizes and hydrolyzes the peptide bond at the C-terminal Gly of UFM1, a ubiquitin-like modifier protein bound to a number of target proteins. Does not hydrolyze SUMO1 or ISG15 ubiquitin-like proteins. The sequence is that of Probable Ufm1-specific protease 2 from Drosophila melanogaster (Fruit fly).